A 116-amino-acid chain; its full sequence is UPF0298 protein EF_2453 (116 aa).

The protein belongs to the UPF0298 family.

Its subcellular location is the cytoplasm. The polypeptide is UPF0298 protein EF_2453 (Enterococcus faecalis (strain ATCC 700802 / V583)).